Consider the following 2226-residue polypeptide: DNA polymerase epsilon catalytic subunit A (2226 aa).

Residues 1240 to 1265 form a disordered region; the sequence is RVSKVTSRKRRNGKANNVSDSEEEER. Zn(2+) is bound by residues Cys2112, Cys2115, Cys2134, and Cys2137. The segment at 2112–2137 adopts a CysA-type zinc-finger fold; it reads CDYCNYIRDIDFCRDEQKNIWNCSNC. [4Fe-4S] cluster is bound by residues Cys2168, Cys2171, Cys2183, and Cys2185. A CysB motif motif is present at residues 2168–2185; that stretch reads CSKCHQIKSDNMSEYCKC.

This sequence belongs to the DNA polymerase type-B family. Heterotetramer. Consists of 4 subunits: POL2, DPB2, DPB3 and DPB4. [4Fe-4S] cluster serves as cofactor.

It localises to the nucleus. It catalyses the reaction DNA(n) + a 2'-deoxyribonucleoside 5'-triphosphate = DNA(n+1) + diphosphate. DNA polymerase II participates in chromosomal DNA replication. In Debaryomyces hansenii (strain ATCC 36239 / CBS 767 / BCRC 21394 / JCM 1990 / NBRC 0083 / IGC 2968) (Yeast), this protein is DNA polymerase epsilon catalytic subunit A (POL2).